The chain runs to 192 residues: MFQIELDEEPVAPKVLEFFKNLPENATAEQSLETFQKTFSFLHENVLEKYTSDLFTPSTLKEELDEQLAQAENNAQSQLSELLKNTKRFVLNYDNDRPEDLEAPEYFTQLVDGVLDKKEDLEANISKYLTKTWSFSRLTLVEQAILQVSSYEILYTETPDVVAVNEAVELSKDFSDEKSSRFINGVLTNFLK.

Belongs to the NusB family.

Involved in transcription antitermination. Required for transcription of ribosomal RNA (rRNA) genes. Binds specifically to the boxA antiterminator sequence of the ribosomal RNA (rrn) operons. This chain is Transcription antitermination protein NusB, found in Lactococcus lactis subsp. lactis (strain IL1403) (Streptococcus lactis).